The primary structure comprises 73 residues: MAKTITISEEAYKLLLKEKRDGESFSDVIVRLIKGNRREVMDYAGIWSDMNDEESNKLFKDLEKMWERWNVNA.

The protein belongs to the UPF0330 family.

Possibly the antitoxin component of a type II toxin-antitoxin (TA) system. The sequence is that of Putative antitoxin M1627_0365 from Saccharolobus islandicus (strain M.16.27) (Sulfolobus islandicus).